We begin with the raw amino-acid sequence, 212 residues long: RING-H2 finger protein ATL68 (212 aa).

The helical transmembrane segment at 24–44 (LGLGYSIAIALGFLVLISTII) threads the bilayer. Residues 136–178 (CSICLCEYMEEEMLRMMPECKHYFHVYCLDAWLKLNGSCPVCR) form an RING-type; atypical zinc finger. Positions 182 to 212 (LPTPQSTPQSTPLSEVVPLSQYAADRRRSRR) are disordered. Low complexity predominate over residues 185–195 (PQSTPQSTPLS).

Belongs to the RING-type zinc finger family. ATL subfamily.

It is found in the membrane. It carries out the reaction S-ubiquitinyl-[E2 ubiquitin-conjugating enzyme]-L-cysteine + [acceptor protein]-L-lysine = [E2 ubiquitin-conjugating enzyme]-L-cysteine + N(6)-ubiquitinyl-[acceptor protein]-L-lysine.. Its pathway is protein modification; protein ubiquitination. This Arabidopsis thaliana (Mouse-ear cress) protein is RING-H2 finger protein ATL68 (ATL68).